The following is a 322-amino-acid chain: Methionyl-tRNA formyltransferase (322 aa).

113-116 provides a ligand contact to (6S)-5,6,7,8-tetrahydrofolate; the sequence is SLLP.

This sequence belongs to the Fmt family.

The catalysed reaction is L-methionyl-tRNA(fMet) + (6R)-10-formyltetrahydrofolate = N-formyl-L-methionyl-tRNA(fMet) + (6S)-5,6,7,8-tetrahydrofolate + H(+). In terms of biological role, attaches a formyl group to the free amino group of methionyl-tRNA(fMet). The formyl group appears to play a dual role in the initiator identity of N-formylmethionyl-tRNA by promoting its recognition by IF2 and preventing the misappropriation of this tRNA by the elongation apparatus. This chain is Methionyl-tRNA formyltransferase, found in Blochmanniella pennsylvanica (strain BPEN).